We begin with the raw amino-acid sequence, 221 residues long: Vesicle-associated membrane protein 714 (221 aa).

At alanine 2 the chain carries N-acetylalanine. Residues 2 to 190 (AIVYAVVARG…RRALWMKNAK (189 aa)) are Cytoplasmic-facing. Positions 7–112 (VVARGTVVLA…AMNDEFSRVL (106 aa)) constitute a Longin domain. The v-SNARE coiled-coil homology domain maps to 127 to 187 (TLNRVRGEVS…KRLRRALWMK (61 aa)). A helical; Anchor for type IV membrane protein transmembrane segment spans residues 191–211 (LLVLLTCLIVFLLYIIIASFC). Over 212-221 (GGITLPSCRS) the chain is Vesicular.

The protein belongs to the synaptobrevin family. As to expression, highly expressed in leaves, stems and roots. Detected in flowers.

The protein localises to the golgi apparatus membrane. Functionally, involved in the targeting and/or fusion of transport vesicles to their target membrane. The polypeptide is Vesicle-associated membrane protein 714 (Arabidopsis thaliana (Mouse-ear cress)).